The primary structure comprises 151 residues: MKHVDIFTDGACSGNPGPGGWGAVLRYGDVEKELCGGEADTTNNRMELLAAISALSALKSPCEVDLYTDSAYVKDGISKWIFGWKKNGWKTADKKPVKNAELWQALEAARDRHKVTLHWVKGHAGHPENERADELARKGMEPFKKGKAVSF.

The RNase H type-1 domain maps to 1–141; sequence MKHVDIFTDG…ADELARKGME (141 aa). Mg(2+) is bound by residues aspartate 9, glutamate 47, aspartate 69, and aspartate 133.

Belongs to the RNase H family. In terms of assembly, monomer. Mg(2+) serves as cofactor.

Its subcellular location is the cytoplasm. The catalysed reaction is Endonucleolytic cleavage to 5'-phosphomonoester.. Endonuclease that specifically degrades the RNA of RNA-DNA hybrids. This Rhizobium johnstonii (strain DSM 114642 / LMG 32736 / 3841) (Rhizobium leguminosarum bv. viciae) protein is Ribonuclease H.